A 128-amino-acid polypeptide reads, in one-letter code: Crossover junction endodeoxyribonuclease Hjc (128 aa).

Position 10 (Glu10) interacts with Mg(2+). Ser30 is a catalytic residue. Asp34 and Glu47 together coordinate Mg(2+).

The protein belongs to the Holliday junction resolvase Hjc family. As to quaternary structure, homodimer. Mg(2+) is required as a cofactor.

The catalysed reaction is Endonucleolytic cleavage at a junction such as a reciprocal single-stranded crossover between two homologous DNA duplexes (Holliday junction).. A structure-specific endonuclease that resolves Holliday junction (HJ) intermediates during genetic recombination. Cleaves 4-way DNA junctions introducing paired nicks in opposing strands, leaving a 5'-terminal phosphate and a 3'-terminal hydroxyl group that are subsequently ligated to produce recombinant products. The protein is Crossover junction endodeoxyribonuclease Hjc of Thermococcus kodakarensis (strain ATCC BAA-918 / JCM 12380 / KOD1) (Pyrococcus kodakaraensis (strain KOD1)).